Reading from the N-terminus, the 351-residue chain is D-alanine--D-alanine ligase (351 aa).

The 209-residue stretch at 135-343 (NQIFLQSGQK…MEEVFSDLIE (209 aa)) folds into the ATP-grasp domain. ATP is bound at residue 167–222 (LETLGFPQFLKPVEGGSSVSVYKITNREQLKEKLALIFESDSKVMSQSFLTGIEVS). Mg(2+) contacts are provided by aspartate 298, glutamate 310, and asparagine 312.

Belongs to the D-alanine--D-alanine ligase family. The cofactor is Mg(2+). Mn(2+) serves as cofactor.

It localises to the cytoplasm. It catalyses the reaction 2 D-alanine + ATP = D-alanyl-D-alanine + ADP + phosphate + H(+). The protein operates within cell wall biogenesis; peptidoglycan biosynthesis. Cell wall formation. The sequence is that of D-alanine--D-alanine ligase from Leptospira interrogans serogroup Icterohaemorrhagiae serovar Lai (strain 56601).